We begin with the raw amino-acid sequence, 301 residues long: MSIDKSYCGFIAIVGRPNVGKSTLLNKLLGQKISITSRKAQTTRHRIVGIHTEGAYQAIYVDTPGLHMEEKRAINRLMNKAASSSIGDVELVIFVVEGTRWTPDDEMVLNKLREGKAPVILAVNKVDNVQEKADLLPHLQFLASQMNFLDIVPISAETGLNVDTIAAIVRKHLPEATHHFPEDYITDCSQRFMASEIIREKLMRFLGAELPYSVTVEIERFVSNERGGYDINGLILVEREGQKKMVIGNKGAKIKTIGIEARKDMQEMFEAPVHLELWVKVKSGWADDERALRSLGYVDDL.

Residues 7-175 form the Era-type G domain; that stretch reads YCGFIAIVGR…AAIVRKHLPE (169 aa). The interval 15–22 is G1; sequence GRPNVGKS. Residue 15–22 coordinates GTP; that stretch reads GRPNVGKS. The segment at 41-45 is G2; the sequence is QTTRH. The segment at 62–65 is G3; sequence DTPG. GTP contacts are provided by residues 62–66 and 124–127; these read DTPGL and NKVD. Residues 124-127 form a G4 region; it reads NKVD. Residues 154–156 form a G5 region; sequence ISA. Residues 206–283 enclose the KH type-2 domain; the sequence is LGAELPYSVT…HLELWVKVKS (78 aa).

The protein belongs to the TRAFAC class TrmE-Era-EngA-EngB-Septin-like GTPase superfamily. Era GTPase family. Monomer.

It is found in the cytoplasm. The protein resides in the cell inner membrane. An essential GTPase that binds both GDP and GTP, with rapid nucleotide exchange. Plays a role in 16S rRNA processing and 30S ribosomal subunit biogenesis and possibly also in cell cycle regulation and energy metabolism. The chain is GTPase Era from Shigella flexneri serotype 5b (strain 8401).